The sequence spans 292 residues: Protoheme IX farnesyltransferase (292 aa).

8 consecutive transmembrane segments (helical) span residues Tyr-15–Met-35, Phe-49–Ile-69, Val-104–Leu-124, Ile-147–Val-167, Ala-171–Leu-191, Thr-218–Val-238, Tyr-242–Phe-262, and Leu-271–Val-291.

The protein belongs to the UbiA prenyltransferase family. Protoheme IX farnesyltransferase subfamily.

It localises to the cell inner membrane. The catalysed reaction is heme b + (2E,6E)-farnesyl diphosphate + H2O = Fe(II)-heme o + diphosphate. It participates in porphyrin-containing compound metabolism; heme O biosynthesis; heme O from protoheme: step 1/1. Functionally, converts heme B (protoheme IX) to heme O by substitution of the vinyl group on carbon 2 of heme B porphyrin ring with a hydroxyethyl farnesyl side group. The polypeptide is Protoheme IX farnesyltransferase (Aquifex aeolicus (strain VF5)).